The sequence spans 144 residues: Transcriptional regulator MraZ (144 aa).

2 SpoVT-AbrB domains span residues 5–50 and 81–124; these read TFNH…ALPQ and AHEV…DRAA.

This sequence belongs to the MraZ family. As to quaternary structure, forms oligomers.

It is found in the cytoplasm. It localises to the nucleoid. In Anaeromyxobacter dehalogenans (strain 2CP-C), this protein is Transcriptional regulator MraZ.